Reading from the N-terminus, the 207-residue chain is N-(5'-phosphoribosyl)anthranilate isomerase (207 aa).

The protein belongs to the TrpF family.

It carries out the reaction N-(5-phospho-beta-D-ribosyl)anthranilate = 1-(2-carboxyphenylamino)-1-deoxy-D-ribulose 5-phosphate. It functions in the pathway amino-acid biosynthesis; L-tryptophan biosynthesis; L-tryptophan from chorismate: step 3/5. This is N-(5'-phosphoribosyl)anthranilate isomerase from Legionella pneumophila (strain Paris).